The primary structure comprises 190 residues: Elongation factor P-like protein (190 aa).

It belongs to the elongation factor P family.

This is Elongation factor P-like protein from Pseudoalteromonas translucida (strain TAC 125).